The sequence spans 90 residues: Elongation factor 1-beta (90 aa).

It belongs to the EF-1-beta/EF-1-delta family.

Its function is as follows. Promotes the exchange of GDP for GTP in EF-1-alpha/GDP, thus allowing the regeneration of EF-1-alpha/GTP that could then be used to form the ternary complex EF-1-alpha/GTP/AAtRNA. This chain is Elongation factor 1-beta, found in Sulfolobus acidocaldarius (strain ATCC 33909 / DSM 639 / JCM 8929 / NBRC 15157 / NCIMB 11770).